The chain runs to 158 residues: Transcriptional repressor NrdR (158 aa).

A zinc finger spans residues 3 to 34 (CPSCQNTDSRVLESRAADAGRSVRRRRECLHC). Residues 49 to 139 (ITVLKRNGNR…VYRDFRGVND (91 aa)) form the ATP-cone domain.

This sequence belongs to the NrdR family. Zn(2+) is required as a cofactor.

In terms of biological role, negatively regulates transcription of bacterial ribonucleotide reductase nrd genes and operons by binding to NrdR-boxes. The protein is Transcriptional repressor NrdR of Prochlorococcus marinus (strain MIT 9313).